The chain runs to 954 residues: Endoplasmic reticulum aminopeptidase 2 (954 aa).

Residues 1–7 are Cytoplasmic-facing; that stretch reads MANSCRK. A helical; Signal-anchor for type II membrane protein transmembrane segment spans residues 8 to 28; it reads LIFNIYVVFYCSAVIMPQICI. The Lumenal segment spans residues 29 to 954; sequence CSQFTSSPID…TLRKWLLTSI (926 aa). N-linked (GlcNAc...) asparagine glycans are attached at residues N79 and N113. Residues E194 and 328–332 contribute to the substrate site; that span reads GAMEN. H364 is a binding site for Zn(2+). The active-site Proton acceptor is the E365. Residues H368 and E387 each coordinate Zn(2+). N399 carries an N-linked (GlcNAc...) asparagine glycan. C415 and C454 are oxidised to a cystine. The N-linked (GlcNAc...) asparagine glycan is linked to N644. A disulfide bond links C753 and C760.

The protein belongs to the peptidase M1 family. As to quaternary structure, heterodimer with ERAP1. The cofactor is Zn(2+). N-glycosylated.

Its subcellular location is the endoplasmic reticulum membrane. Functionally, aminopeptidase that plays a central role in peptide trimming, a step required for the generation of most HLA class I-binding peptides. Peptide trimming is essential to customize longer precursor peptides to fit them to the correct length required for presentation on MHC class I molecules. Preferentially hydrolyzes the basic residues Arg and Lys. The sequence is that of Endoplasmic reticulum aminopeptidase 2 (ERAP2) from Bos taurus (Bovine).